A 448-amino-acid chain; its full sequence is Probable glycine dehydrogenase (decarboxylating) subunit 1 (448 aa).

This sequence belongs to the GcvP family. N-terminal subunit subfamily. In terms of assembly, the glycine cleavage system is composed of four proteins: P, T, L and H. In this organism, the P 'protein' is a heterodimer of two subunits.

The catalysed reaction is N(6)-[(R)-lipoyl]-L-lysyl-[glycine-cleavage complex H protein] + glycine + H(+) = N(6)-[(R)-S(8)-aminomethyldihydrolipoyl]-L-lysyl-[glycine-cleavage complex H protein] + CO2. The glycine cleavage system catalyzes the degradation of glycine. The P protein binds the alpha-amino group of glycine through its pyridoxal phosphate cofactor; CO(2) is released and the remaining methylamine moiety is then transferred to the lipoamide cofactor of the H protein. The sequence is that of Probable glycine dehydrogenase (decarboxylating) subunit 1 (gcvPA) from Bacillus subtilis (strain 168).